The following is a 134-amino-acid chain: Small ribosomal subunit protein uS11 (134 aa).

This sequence belongs to the universal ribosomal protein uS11 family. As to quaternary structure, part of the 30S ribosomal subunit. Interacts with proteins S7 and S18. Binds to IF-3.

Its function is as follows. Located on the platform of the 30S subunit, it bridges several disparate RNA helices of the 16S rRNA. Forms part of the Shine-Dalgarno cleft in the 70S ribosome. This is Small ribosomal subunit protein uS11 from Micrococcus luteus (strain ATCC 4698 / DSM 20030 / JCM 1464 / CCM 169 / CCUG 5858 / IAM 1056 / NBRC 3333 / NCIMB 9278 / NCTC 2665 / VKM Ac-2230) (Micrococcus lysodeikticus).